Reading from the N-terminus, the 1212-residue chain is Metabotropic glutamate receptor 5 (1212 aa).

Positions 1–20 (MVLLLILSVLLLKEDVRGSA) are cleaved as a signal peptide. The Extracellular portion of the chain corresponds to 22-580 (SSERRVVAHM…QYLRWGDPEP (559 aa)). Cys-57 and Cys-99 form a disulfide bridge. An L-glutamate-binding site is contributed by Tyr-64. Asn-88 carries an N-linked (GlcNAc...) asparagine glycan. L-glutamate is bound by residues Ser-152 and 173–175 (SAT). Asn-210 carries an N-linked (GlcNAc...) asparagine glycan. Tyr-223 is an L-glutamate binding site. Intrachain disulfides connect Cys-241–Cys-530, Cys-276–Cys-278, Cys-365–Cys-381, Cys-419–Cys-426, Cys-511–Cys-531, Cys-515–Cys-534, Cys-537–Cys-549, and Cys-552–Cys-565. Asp-305 serves as a coordination point for L-glutamate. N-linked (GlcNAc...) asparagine glycans are attached at residues Asn-378 and Asn-382. Lys-396 contributes to the L-glutamate binding site. Asn-445 is a glycosylation site (N-linked (GlcNAc...) asparagine). Residues 581–603 (IAAVVFACLGLLATLFVTVVFII) form a helical membrane-spanning segment. Residues 604–613 (YRDTPVVKSS) are Cytoplasmic-facing. The helical transmembrane segment at 614–636 (SRELCYIILAGICLGYLCTFCLI) threads the bilayer. The Extracellular segment spans residues 637–644 (AKPKQIYC). The cysteines at positions 644 and 733 are disulfide-linked. The helical transmembrane segment at 645 to 667 (YLQRIGIGLSPAMSYSALVTKTN) threads the bilayer. The Cytoplasmic portion of the chain corresponds to 668–693 (RIARILAGSKKKICTKKPRFMSACAQ). A helical membrane pass occupies residues 694 to 714 (LVIAFILICIQLGIIVALFIM). Residues 715–737 (EPPDIMHDYPSIREVYLICNTTN) lie on the Extracellular side of the membrane. A glycan (N-linked (GlcNAc...) asparagine) is linked at Asn-734. Residues 738-759 (LGVVTPLGYNGLLILSCTFYAF) traverse the membrane as a helical segment. The Cytoplasmic portion of the chain corresponds to 760–772 (KTRNVPANFNEAK). The chain crosses the membrane as a helical span at residues 773 to 795 (YIAFTMYTTCIIWLAFVPIYFGS). The Extracellular portion of the chain corresponds to 796–798 (NYK). A helical transmembrane segment spans residues 799–820 (IITMCFSVSLSATVALGCMFVP). At 821-1212 (KVYIILAKPE…RDYTQSSSSL (392 aa)) the chain is on the cytoplasmic side. Ser-861 carries the phosphoserine modification. Residues Arg-869 and Arg-925 each carry the omega-N-methylarginine modification. Disordered regions lie at residues 937–971 (INKK…GGSA), 1010–1056 (FPAP…SQGS), and 1132–1191 (GAQA…ALCI). A compositionally biased stretch (gly residues) spans 961-971 (LGAGAGAGGSA). 2 positions are modified to phosphoserine: Ser-1018 and Ser-1020. Residues 1132–1153 (GAQAAGDAARESPAAGPEAAAA) are compositionally biased toward low complexity. Polar residues predominate over residues 1174–1185 (DSGSTTPNSPVS).

Belongs to the G-protein coupled receptor 3 family. In terms of assembly, the PPXXF motif binds HOMER1, HOMER2 and HOMER3. Interacts with SIAH1, RYR1, RYR2, ITPR1, SHANK1, SHANK3 and TAMALIN. Interacts with NCDN. Isoform 2 interacts with NECAB2. Interacts with CAMK2A.

The protein localises to the cell membrane. Functionally, G-protein coupled receptor for glutamate. Ligand binding causes a conformation change that triggers signaling via guanine nucleotide-binding proteins (G proteins) and modulates the activity of down-stream effectors. Signaling activates a phosphatidylinositol-calcium second messenger system and generates a calcium-activated chloride current. Plays an important role in the regulation of synaptic plasticity and the modulation of the neural network activity. The polypeptide is Metabotropic glutamate receptor 5 (GRM5) (Homo sapiens (Human)).